We begin with the raw amino-acid sequence, 142 residues long: 3-hydroxyacyl-[acyl-carrier-protein] dehydratase FabZ (142 aa).

The active site involves H47.

It belongs to the thioester dehydratase family. FabZ subfamily.

It is found in the cytoplasm. The catalysed reaction is a (3R)-hydroxyacyl-[ACP] = a (2E)-enoyl-[ACP] + H2O. Its function is as follows. Involved in unsaturated fatty acids biosynthesis. Catalyzes the dehydration of short chain beta-hydroxyacyl-ACPs and long chain saturated and unsaturated beta-hydroxyacyl-ACPs. The protein is 3-hydroxyacyl-[acyl-carrier-protein] dehydratase FabZ of Coxiella burnetii (strain RSA 331 / Henzerling II).